Reading from the N-terminus, the 156-residue chain is Deoxyuridine 5'-triphosphate nucleotidohydrolase (156 aa).

Residues 76 to 78 (RSG), N89, 93 to 95 (TVD), and K103 contribute to the substrate site.

Belongs to the dUTPase family. Mg(2+) is required as a cofactor.

It catalyses the reaction dUTP + H2O = dUMP + diphosphate + H(+). Its pathway is pyrimidine metabolism; dUMP biosynthesis; dUMP from dCTP (dUTP route): step 2/2. Functionally, this enzyme is involved in nucleotide metabolism: it produces dUMP, the immediate precursor of thymidine nucleotides and it decreases the intracellular concentration of dUTP so that uracil cannot be incorporated into DNA. This Rhizobium leguminosarum bv. trifolii (strain WSM2304) protein is Deoxyuridine 5'-triphosphate nucleotidohydrolase.